Here is a 91-residue protein sequence, read N- to C-terminus: uncharacterized protein (91 aa).

Residues 71 to 91 are disordered; that stretch reads NRENNSRSSVKQIINQETEEE. The segment covering 76 to 91 has biased composition (polar residues); it reads SRSSVKQIINQETEEE.

This is an uncharacterized protein from Bacillus subtilis (strain 168).